Consider the following 517-residue polypeptide: Xylosidase/arabinosidase (517 aa).

The active-site Proton acceptor is Asp-15. The active-site Proton donor is the Glu-185.

This sequence belongs to the glycosyl hydrolase 43 family.

The catalysed reaction is Hydrolysis of (1-&gt;4)-beta-D-xylans, to remove successive D-xylose residues from the non-reducing termini.. It carries out the reaction Hydrolysis of terminal non-reducing alpha-L-arabinofuranoside residues in alpha-L-arabinosides.. Has a 1.6-fold higher activity as an arabinosidase than as a beta-xylosidase when tested on the substrates nitrophenyl-beta-D-xylopyranoside and P-nitrophenyl-alpha-L-arabinofuranoside. This is Xylosidase/arabinosidase (xylB) from Butyrivibrio fibrisolvens.